Consider the following 428-residue polypeptide: GTPase Obg (428 aa).

The Obg domain maps to 1 to 158 (MFVDQVKIYV…RDVILELKVL (158 aa)). One can recognise an OBG-type G domain in the interval 159 to 329 (ADVGLVGFPS…LLFEVANLIE (171 aa)). GTP contacts are provided by residues 165–172 (GFPSVGKS), 190–194 (FTTIV), 212–215 (DLPG), 282–285 (NKMD), and 310–312 (SAV). Mg(2+) is bound by residues Ser172 and Thr192. One can recognise an OCT domain in the interval 350-428 (KFDTEGVKFE…ILEYEFEFID (79 aa)).

The protein belongs to the TRAFAC class OBG-HflX-like GTPase superfamily. OBG GTPase family. In terms of assembly, monomer. Requires Mg(2+) as cofactor.

It localises to the cytoplasm. An essential GTPase which binds GTP, GDP and possibly (p)ppGpp with moderate affinity, with high nucleotide exchange rates and a fairly low GTP hydrolysis rate. Plays a role in control of the cell cycle, stress response, ribosome biogenesis and in those bacteria that undergo differentiation, in morphogenesis control. This Bacillus cereus (strain B4264) protein is GTPase Obg.